The primary structure comprises 486 residues: Malonate-semialdehyde dehydrogenase (486 aa).

NAD(+) is bound by residues F154, K178, E181, R182, and S231. The active-site Nucleophile is C286. E386 serves as a coordination point for NAD(+).

The protein belongs to the aldehyde dehydrogenase family. IolA subfamily. As to quaternary structure, homotetramer.

It catalyses the reaction 3-oxopropanoate + NAD(+) + CoA + H2O = hydrogencarbonate + acetyl-CoA + NADH + H(+). The enzyme catalyses 2-methyl-3-oxopropanoate + NAD(+) + CoA + H2O = propanoyl-CoA + hydrogencarbonate + NADH + H(+). The protein operates within polyol metabolism; myo-inositol degradation into acetyl-CoA; acetyl-CoA from myo-inositol: step 7/7. Its function is as follows. Catalyzes the oxidation of malonate semialdehyde (MSA) and methylmalonate semialdehyde (MMSA) into acetyl-CoA and propanoyl-CoA, respectively. Is involved in a myo-inositol catabolic pathway. Bicarbonate, and not CO2, is the end-product of the enzymatic reaction. The protein is Malonate-semialdehyde dehydrogenase of Bacillus cereus (strain B4264).